Consider the following 274-residue polypeptide: Chemotaxis protein methyltransferase 1 (274 aa).

The region spanning 1 to 274 (MSAANADFEL…CSPGIIYRAK (274 aa)) is the CheR-type methyltransferase domain. S-adenosyl-L-methionine-binding positions include asparagine 72, threonine 74, arginine 78, glutamate 115, aspartate 144, 200 to 201 (NL), and 217 to 218 (RN).

It carries out the reaction L-glutamyl-[protein] + S-adenosyl-L-methionine = [protein]-L-glutamate 5-O-methyl ester + S-adenosyl-L-homocysteine. In terms of biological role, methylation of the membrane-bound methyl-accepting chemotaxis proteins (MCP) to form gamma-glutamyl methyl ester residues in MCP. This is Chemotaxis protein methyltransferase 1 (cheR1) from Pseudomonas aeruginosa (strain ATCC 15692 / DSM 22644 / CIP 104116 / JCM 14847 / LMG 12228 / 1C / PRS 101 / PAO1).